Reading from the N-terminus, the 620-residue chain is Ferric/cupric reductase transmembrane component 7 (620 aa).

Topologically, residues 1–45 (MIEERDLVLSNGIHCIADIHSELYARLKKESQAVTPWVYQKQYGK) are extracellular. A helical transmembrane segment spans residues 46–66 (FVTYFVAVIIFLSLIKKLAFM). Residues 67–107 (YYDSSEEFLPEKKNSPTTPSVFLARIMTKLVAFNRYICYRK) are Cytoplasmic-facing. Residues 108-128 (FPTLIFSYLGIPTSVGTFLVV) traverse the membrane as a helical segment. The Extracellular segment spans residues 129–167 (MATTLYTLLYCFVPHPFYRPCAGFGSPPLSVRAGIMAIS). Residues 161–320 (AGIMAISLVS…LAVKGYLRPG (160 aa)) form the Ferric oxidoreductase domain. The chain crosses the membrane as a helical span at residues 168–188 (LVSFVFSLSGKINVIGWLVGL). The Cytoplasmic portion of the chain corresponds to 189–194 (SYEKIN). Residues 195 to 215 (IYHQWASILCLFFSWVHVIPF) form a helical membrane-spanning segment. His-197 and His-211 together coordinate heme. Residues 216–237 (LRQARHEGGYERMHQRWKASDM) lie on the Extracellular side of the membrane. Residues 238 to 258 (WRSGVPPILFLNLLWLSSLPI) traverse the membrane as a helical segment. Residues 259–265 (ARRHFYE) lie on the Cytoplasmic side of the membrane. A helical transmembrane segment spans residues 266-286 (IFLQLHWILAVGFYISLFYHV). The heme site is built by His-271 and His-285. Residues 287 to 292 (YPELNS) are Extracellular-facing. A helical membrane pass occupies residues 293–313 (HMYLVATIVVWFAQLFYRLAV). Residues 314–620 (KGYLRPGRSF…CYLHSESFGY (307 aa)) are Cytoplasmic-facing. The 99-residue stretch at 321 to 419 (RSFMASTIAN…DGPYGGIERD (99 aa)) folds into the FAD-binding FR-type domain. Position 369–375 (369–375 (HPFSIFP)) interacts with FAD. A disordered region spans residues 519-544 (SDQSDLAKREKDTEFGQDDTESNSTF). A compositionally biased stretch (basic and acidic residues) spans 523 to 532 (DLAKREKDTE).

This sequence belongs to the ferric reductase (FRE) family. Requires FAD as cofactor.

The protein localises to the cell membrane. The catalysed reaction is 2 a Fe(II)-siderophore + NADP(+) + H(+) = 2 a Fe(III)-siderophore + NADPH. Its function is as follows. Cell surface metalloreductase. May be involved in copper homeostasis. The polypeptide is Ferric/cupric reductase transmembrane component 7 (FRE7) (Saccharomyces cerevisiae (strain YJM789) (Baker's yeast)).